We begin with the raw amino-acid sequence, 1401 residues long: DNA-directed RNA polymerase subunit beta' (1401 aa).

Positions 70, 72, 85, and 88 each coordinate Zn(2+). Asp460, Asp462, and Asp464 together coordinate Mg(2+). Cys814, Cys888, Cys895, and Cys898 together coordinate Zn(2+). The disordered stretch occupies residues 1369-1388; sequence RQKQKAVEQEGPSAEQATDN.

It belongs to the RNA polymerase beta' chain family. In terms of assembly, the RNAP catalytic core consists of 2 alpha, 1 beta, 1 beta' and 1 omega subunit. When a sigma factor is associated with the core the holoenzyme is formed, which can initiate transcription. The cofactor is Mg(2+). Zn(2+) is required as a cofactor.

The catalysed reaction is RNA(n) + a ribonucleoside 5'-triphosphate = RNA(n+1) + diphosphate. Its function is as follows. DNA-dependent RNA polymerase catalyzes the transcription of DNA into RNA using the four ribonucleoside triphosphates as substrates. The polypeptide is DNA-directed RNA polymerase subunit beta' (Aliivibrio fischeri (strain ATCC 700601 / ES114) (Vibrio fischeri)).